Reading from the N-terminus, the 193-residue chain is Rho-related GTP-binding protein RhoA-C (193 aa).

Residues Gly-12–Thr-19, Phe-30–Thr-37, Asp-59–Gln-63, Asn-117–Asp-120, and Ser-160–Lys-162 contribute to the GTP site. Tyr-34 carries a (Microbial infection) O-linked (GlcNAc) tyrosine; by Yersinia Afp18 glycan. A Cysteine methyl ester modification is found at Cys-190. The S-geranylgeranyl cysteine moiety is linked to residue Cys-190. Residues Leu-191–Leu-193 constitute a propeptide, removed in mature form.

This sequence belongs to the small GTPase superfamily. Rho family. Post-translationally, (Microbial infection) Glycosylated at Tyr-34 by Yersinia ruckeri toxin Afp18. Mono-O-GlcNAcylation by Afp18 inhibits RhoA activation by guanine nucleotide exchange factors and blocks RhoA signaling.

It localises to the cell membrane. Functionally, regulates a signal transduction pathway linking plasma membrane receptors to the assembly of focal adhesions and actin stress fibers. The polypeptide is Rho-related GTP-binding protein RhoA-C (Danio rerio (Zebrafish)).